The sequence spans 397 residues: Thioredoxin-interacting protein (397 aa).

A Glycyl lysine isopeptide (Lys-Gly) (interchain with G-Cter in ubiquitin) cross-link involves residue lysine 213. Serine 362 carries the post-translational modification Phosphoserine.

It belongs to the arrestin family. In terms of assembly, homodimer; disulfide-linked. Interacts with TXN/thioredoxin through its redox-active site. Interacts with transcriptional repressors ZBTB16, ZBTB32 and HDAC1. Interacts with DDIT4. In terms of processing, ubiquitinated; undergoes heterotypic 'Lys-48'-/'Lys-63'-branched polyubiquitination catalyzed by ITCH and UBR5 resulting in proteasomal degradation. Deubiquitinated by USP5, leading to TXNIP stabilization. As to expression, ubiquitously expressed.

The protein localises to the cytoplasm. Its function is as follows. May act as an oxidative stress mediator by inhibiting thioredoxin activity or by limiting its bioavailability. Interacts with COPS5 and restores COPS5-induced suppression of CDKN1B stability, blocking the COPS5-mediated translocation of CDKN1B from the nucleus to the cytoplasm. Functions as a transcriptional repressor, possibly by acting as a bridge molecule between transcription factors and corepressor complexes, and over-expression will induce G0/G1 cell cycle arrest. Required for the maturation of natural killer cells. Acts as a suppressor of tumor cell growth. Inhibits the proteasomal degradation of DDIT4, and thereby contributes to the inhibition of the mammalian target of rapamycin complex 1 (mTORC1). This is Thioredoxin-interacting protein (Txnip) from Mus musculus (Mouse).